A 492-amino-acid polypeptide reads, in one-letter code: Ketol-acid reductoisomerase (NADP(+)) (492 aa).

In terms of domain architecture, KARI N-terminal Rossmann spans 17–208 (LGQCRLMKKN…GSNKAGVLES (192 aa)). NADP(+) is bound by residues 45 to 48 (CGSQ), Arg-68, Ser-76, and Ser-78. His-132 is an active-site residue. Gly-158 is an NADP(+) binding site. KARI C-terminal knotted domains are found at residues 209–344 (SFVA…KAPV) and 345–487 (YCET…MKDM). Mg(2+) contacts are provided by Asp-217, Glu-221, Glu-389, and Glu-393. Position 414 (Ser-414) interacts with substrate.

It belongs to the ketol-acid reductoisomerase family. Requires Mg(2+) as cofactor.

It carries out the reaction (2R)-2,3-dihydroxy-3-methylbutanoate + NADP(+) = (2S)-2-acetolactate + NADPH + H(+). It catalyses the reaction (2R,3R)-2,3-dihydroxy-3-methylpentanoate + NADP(+) = (S)-2-ethyl-2-hydroxy-3-oxobutanoate + NADPH + H(+). Its pathway is amino-acid biosynthesis; L-isoleucine biosynthesis; L-isoleucine from 2-oxobutanoate: step 2/4. It functions in the pathway amino-acid biosynthesis; L-valine biosynthesis; L-valine from pyruvate: step 2/4. Involved in the biosynthesis of branched-chain amino acids (BCAA). Catalyzes an alkyl-migration followed by a ketol-acid reduction of (S)-2-acetolactate (S2AL) to yield (R)-2,3-dihydroxy-isovalerate. In the isomerase reaction, S2AL is rearranged via a Mg-dependent methyl migration to produce 3-hydroxy-3-methyl-2-ketobutyrate (HMKB). In the reductase reaction, this 2-ketoacid undergoes a metal-dependent reduction by NADPH to yield (R)-2,3-dihydroxy-isovalerate. In Blochmanniella floridana, this protein is Ketol-acid reductoisomerase (NADP(+)).